Here is a 543-residue protein sequence, read N- to C-terminus: RuBisCO large subunit-binding protein subunit alpha, chloroplastic (543 aa).

The transit peptide at 1-2 (GA) directs the protein to the chloroplast.

The protein belongs to the chaperonin (HSP60) family. Oligomer of probably six alpha and six beta subunits.

The protein resides in the plastid. Its subcellular location is the chloroplast. Its function is as follows. This protein binds RuBisCO small and large subunits and is implicated in the assembly of the enzyme oligomer. This is RuBisCO large subunit-binding protein subunit alpha, chloroplastic from Triticum aestivum (Wheat).